Reading from the N-terminus, the 507-residue chain is ATP synthase subunit alpha, chloroplastic (507 aa).

Residue 170–177 coordinates ATP; the sequence is GDRQTGKT.

This sequence belongs to the ATPase alpha/beta chains family. In terms of assembly, F-type ATPases have 2 components, CF(1) - the catalytic core - and CF(0) - the membrane proton channel. CF(1) has five subunits: alpha(3), beta(3), gamma(1), delta(1), epsilon(1). CF(0) has four main subunits: a, b, b' and c.

The protein resides in the plastid. The protein localises to the chloroplast thylakoid membrane. It catalyses the reaction ATP + H2O + 4 H(+)(in) = ADP + phosphate + 5 H(+)(out). Produces ATP from ADP in the presence of a proton gradient across the membrane. The alpha chain is a regulatory subunit. In Populus alba (White poplar), this protein is ATP synthase subunit alpha, chloroplastic.